Consider the following 507-residue polypeptide: Methionine--tRNA ligase (507 aa).

A 'HIGH' region motif is present at residues 12-22 (YYVNDVSHIGH). The 'KMSKS' region signature appears at 295–299 (KISKS). Position 298 (lysine 298) interacts with ATP.

The protein belongs to the class-I aminoacyl-tRNA synthetase family. MetG type 2B subfamily. As to quaternary structure, monomer.

Its subcellular location is the cytoplasm. It carries out the reaction tRNA(Met) + L-methionine + ATP = L-methionyl-tRNA(Met) + AMP + diphosphate. Functionally, is required not only for elongation of protein synthesis but also for the initiation of all mRNA translation through initiator tRNA(fMet) aminoacylation. The protein is Methionine--tRNA ligase of Rickettsia typhi (strain ATCC VR-144 / Wilmington).